We begin with the raw amino-acid sequence, 756 residues long: Cilium assembly protein DZIP1L (756 aa).

The interval 1–20 (MLGQFSPGEPYTTSLSSTPP) is disordered. Residues 10–19 (PYTTSLSSTP) are compositionally biased toward low complexity. Residues 108–158 (DFLSSQLAGLEERLQAATSLVQQGEGQRAELEKSLQETKQENRRRKQLIAT) adopt a coiled-coil conformation. The segment at 171–194 (HKCQFCEKSFVNYSYLQAHVQRRH) adopts a C2H2-type zinc-finger fold. Basic and acidic residues-rich tracts occupy residues 193-202 (RHPEVTDAEK), 237-262 (NLRRQQEQEQQRRREQSEKEALERWK), 319-335 (DPEKEMRENRERELRER), and 344-365 (RRKFQEAQKRHQQENKELKSEN). Disordered regions lie at residues 193-212 (RHPEVTDAEKQKKRKVEEME), 233-262 (QQADNLRRQQEQEQQRRREQSEKEALERWK), 310-365 (NNAS…KSEN), 409-466 (KIKK…MRES), 531-626 (VKSL…AYIT), and 693-756 (IKTP…GTSA). Coiled coils occupy residues 196–283 (EVTD…FLQE) and 321–416 (EKEM…LSAT). Residues 534–558 (LQKSSGKPTPNTLKQRGKKTSTPLN) show a composition bias toward polar residues. Residues 560–578 (KSLRFRQDSKASDRREKSQ) show a composition bias toward basic and acidic residues. Residues 586 to 598 (TPTPRSKAPPPNQ) are compositionally biased toward pro residues.

This sequence belongs to the DZIP C2H2-type zinc-finger protein family.

The protein localises to the cytoplasm. The protein resides in the cytoskeleton. It localises to the cilium basal body. Its subcellular location is the microtubule organizing center. It is found in the centrosome. The protein localises to the centriole. Involved in primary cilium formation. Probably acts as a transition zone protein required for localization of PKD1/PC1 and PKD2/PC2 to the ciliary membrane. In Danio rerio (Zebrafish), this protein is Cilium assembly protein DZIP1L (dzip1l).